Reading from the N-terminus, the 372-residue chain is Cyclin-dependent kinase 9 (372 aa).

Positions Tyr-19 to Phe-315 constitute a Protein kinase domain. Ile-25–Val-33 is a binding site for ATP. Position 44 is an N6-acetyllysine; by EP300/CBP, PCAF/KAT2B and GCN5/KAT2A (Lys-44). ATP is bound by residues Lys-48 and Asp-104 to Cys-106. Lys-48 is subject to N6-acetyllysine; by PCAF/KAT2B and GCN5/KAT2A. Asp-149 serves as the catalytic Proton acceptor. A T-loop region spans residues Ala-166 to Thr-191. Asp-167 contributes to the ATP binding site. Residue Ser-175 is modified to Phosphoserine. Position 186 is a phosphothreonine; by CaMK1D (Thr-186). Positions Arg-343–Phe-372 are disordered. Ser-347 is modified (phosphoserine; by CDK9 and PKA). The segment covering Ser-347–Thr-366 has biased composition (polar residues). A Phosphothreonine; by CDK9 modification is found at Thr-350. Ser-353 carries the phosphoserine; by CDK9 modification. Phosphothreonine; by CDK9 is present on Thr-354. The residue at position 357 (Ser-357) is a Phosphoserine; by CDK9. Phosphothreonine; by CDK9 is present on residues Thr-362 and Thr-363.

It belongs to the protein kinase superfamily. CMGC Ser/Thr protein kinase family. CDC2/CDKX subfamily. In terms of assembly, component of the super elongation complex (SEC), at least composed of EAF1, EAF2, CDK9, MLLT3/AF9, AFF (AFF1 or AFF4), the P-TEFb complex and ELL (ELL, ELL2 or ELL3). Associates with CCNT1/cyclin-T1, CCNT2/cyclin-T2 (isoform A and isoform B) or CCNK/cyclin-K to form active P-TEFb. P-TEFb forms a complex with AFF4/AF5Q31 and is part of the super elongation complex (SEC). Component of a complex which is composed of at least 5 members: HTATSF1/Tat-SF1, P-TEFb complex, RNA pol II, SUPT5H, and NCL/nucleolin. Associates with UBR5 and forms a transcription regulatory complex composed of CDK9, RNAP II, UBR5 and TFIIS/TCEA1 that can stimulate target gene transcription (e.g. gamma fibrinogen/FGG) by recruiting their promoters. Component of the 7SK snRNP inactive complex which is composed of at least 8 members: P-TEFb (composed of CDK9 and CCNT1/cyclin-T1), HEXIM1, HEXIM2, LARP7, BCDIN3, SART3 proteins and 7SK and U6 snRNAs. This inactive 7SK snRNP complex can also interact with NCOR1 and HDAC3, probably to regulate CDK9 acetylation. Release of P-TEFb from P-TEFb/7SK snRNP complex requires both PP2B to transduce calcium Ca(2+) signaling in response to stimuli (e.g. UV or hexamethylene bisacetamide (HMBA)), and PPP1CA to dephosphorylate Thr-186. This released P-TEFb remains inactive in the pre-initiation complex with BRD4 until new Thr-186 phosphorylation occurs after the synthesis of a short RNA. Interacts with BRD4; to target chromatin binding. Interacts with JMJD6. Interacts with activated nuclear STAT3 and RELA/p65. Binds to AR and MYOD1. Forms a complex composed of CDK9, CCNT1/cyclin-T1, EP300 and GATA4 that stimulates hypertrophy in cardiomyocytes. The large PER complex involved in the repression of transcriptional termination is composed of at least PER2, CDK9, DDX5, DHX9, NCBP1 and POLR2A (active). Interacts with HSF1. Interacts with TBX21. Interacts with WDR43. Interacts with ZMYND8; the association appears to occur between homodimeric ZMYND8 and the activated form of the P-TEFb complex. In terms of processing, autophosphorylation at Thr-186, Ser-347, Thr-350, Ser-353, Thr-354 and Ser-357 triggers kinase activity by promoting cyclin and substrate binding upon conformational changes. Thr-186 phosphorylation requires the calcium Ca(2+) signaling pathway, including CaMK1D and calmodulin. This inhibition is relieved by Thr-29 dephosphorylation. Phosphorylation at Ser-175 inhibits kinase activity. Can be phosphorylated on either Thr-362 or Thr-363 but not on both simultaneously. Dephosphorylation of Thr-186 by PPM1A and PPM1B blocks CDK9 activity and may lead to CDK9 proteasomal degradation. However, PPP1CA-mediated Thr-186 dephosphorylation is required to release P-TEFb from its inactive P-TEFb/7SK snRNP complex. Dephosphorylated at Ser-347 by the PNUTS-PP1 complex during RNA polymerase II transcription pause-release. Dephosphorylation of C-terminus Thr and Ser residues by protein phosphatase-1 (PP1) triggers CDK9 activity. Post-translationally, N6-acetylation of Lys-44 promotes kinase activity, whereas acetylation of both Lys-44 and Lys-48 mediated by PCAF/KAT2B and GCN5/KAT2A reduces kinase activity. The acetylated form associates with PML bodies in the nuclear matrix and with the transcriptionally silent HIV-1 genome; deacetylated upon transcription stimulation. Deacetylated by SIRT7, promoting the kinase activity and subsequent 'Ser-2' phosphorylation of the C-terminal domain (CTD) of RNA polymerase II. In terms of processing, polyubiquitinated and thus activated by UBR5. This ubiquitination is promoted by TFIIS/TCEA1 and favors 'Ser-2' phosphorylation of RPB1/POLR2A CTD. In terms of tissue distribution, expressed at high levels in brain and kidney.

It is found in the nucleus. The protein resides in the cytoplasm. It localises to the PML body. It catalyses the reaction L-seryl-[protein] + ATP = O-phospho-L-seryl-[protein] + ADP + H(+). The catalysed reaction is L-threonyl-[protein] + ATP = O-phospho-L-threonyl-[protein] + ADP + H(+). The enzyme catalyses [DNA-directed RNA polymerase] + ATP = phospho-[DNA-directed RNA polymerase] + ADP + H(+). Its activity is regulated as follows. Activation by Thr-186 phosphorylation is calcium Ca(2+) signaling pathway-dependent; actively inactivated by dephosphorylation mediated by PPP1CA, PPM1A and PPM1B. Reversibly repressed by acetylation at Lys-44 and Lys-48. In terms of biological role, protein kinase involved in the regulation of transcription. Member of the cyclin-dependent kinase pair (CDK9/cyclin-T) complex, also called positive transcription elongation factor b (P-TEFb), which facilitates the transition from abortive to productive elongation by phosphorylating the CTD (C-terminal domain) of the large subunit of RNA polymerase II (RNAP II) POLR2A, SUPT5H and RDBP. This complex is inactive when in the 7SK snRNP complex form. Phosphorylates EP300, MYOD1, RPB1/POLR2A and AR and the negative elongation factors DSIF and NELFE. Regulates cytokine inducible transcription networks by facilitating promoter recognition of target transcription factors (e.g. TNF-inducible RELA/p65 activation and IL-6-inducible STAT3 signaling). Promotes RNA synthesis in genetic programs for cell growth, differentiation and viral pathogenesis. P-TEFb is also involved in cotranscriptional histone modification, mRNA processing and mRNA export. Modulates a complex network of chromatin modifications including histone H2B monoubiquitination (H2Bub1), H3 lysine 4 trimethylation (H3K4me3) and H3K36me3; integrates phosphorylation during transcription with chromatin modifications to control co-transcriptional histone mRNA processing. The CDK9/cyclin-K complex has also a kinase activity towards CTD of RNAP II and can substitute for CDK9/cyclin-T P-TEFb in vitro. Replication stress response protein; the CDK9/cyclin-K complex is required for genome integrity maintenance, by promoting cell cycle recovery from replication arrest and limiting single-stranded DNA amount in response to replication stress, thus reducing the breakdown of stalled replication forks and avoiding DNA damage. In addition, probable function in DNA repair of isoform 2 via interaction with KU70/XRCC6. Promotes cardiac myocyte enlargement. RPB1/POLR2A phosphorylation on 'Ser-2' in CTD activates transcription. AR phosphorylation modulates AR transcription factor promoter selectivity and cell growth. DSIF and NELF phosphorylation promotes transcription by inhibiting their negative effect. The phosphorylation of MYOD1 enhances its transcriptional activity and thus promotes muscle differentiation. Catalyzes phosphorylation of KAT5, promoting KAT5 recruitment to chromatin and histone acetyltransferase activity. The sequence is that of Cyclin-dependent kinase 9 (Cdk9) from Mus musculus (Mouse).